Consider the following 385-residue polypeptide: Leucine aminopeptidase 1 (385 aa).

The signal sequence occupies residues 1–19; that stretch reads MKFPNLLSLGVAASTTVLA. A propeptide spanning residues 20 to 87 is cleaved from the precursor; the sequence is AVPNQKPIGD…FPRTFAQTTV (68 aa). N-linked (GlcNAc...) asparagine glycosylation is present at Asn-177. Positions 185, 204, 243, and 270 each coordinate Zn(2+). A disulfide bond links Cys-319 and Cys-323. Zn(2+) is bound at residue His-352.

Belongs to the peptidase M28 family. M28E subfamily. Monomer. Zn(2+) is required as a cofactor.

Its subcellular location is the secreted. In terms of biological role, extracellular aminopeptidase that allows assimilation of proteinaceous substrates. This chain is Leucine aminopeptidase 1 (LAP1), found in Ajellomyces capsulatus (strain H88) (Darling's disease fungus).